A 422-amino-acid polypeptide reads, in one-letter code: Phosphoribosylamine--glycine ligase (422 aa).

The 207-residue stretch at K107–D313 folds into the ATP-grasp domain. Residue V133–S194 coordinates ATP. Residues E283 and N285 each contribute to the Mg(2+) site.

Belongs to the GARS family. Mg(2+) is required as a cofactor. It depends on Mn(2+) as a cofactor.

It carries out the reaction 5-phospho-beta-D-ribosylamine + glycine + ATP = N(1)-(5-phospho-beta-D-ribosyl)glycinamide + ADP + phosphate + H(+). Its pathway is purine metabolism; IMP biosynthesis via de novo pathway; N(1)-(5-phospho-D-ribosyl)glycinamide from 5-phospho-alpha-D-ribose 1-diphosphate: step 2/2. This is Phosphoribosylamine--glycine ligase from Bacillus subtilis (strain 168).